Here is a 432-residue protein sequence, read N- to C-terminus: Adenosylmethionine-8-amino-7-oxononanoate aminotransferase (432 aa).

Trp52 provides a ligand contact to substrate. A pyridoxal 5'-phosphate-binding site is contributed by 112-113; the sequence is GS. Substrate is bound at residue Tyr144. Asp245 provides a ligand contact to pyridoxal 5'-phosphate. Substrate is bound by residues Lys274 and Gly307. Lys274 carries the N6-(pyridoxal phosphate)lysine modification. 308–309 lines the pyridoxal 5'-phosphate pocket; sequence PT. Arg391 contacts substrate.

It belongs to the class-III pyridoxal-phosphate-dependent aminotransferase family. BioA subfamily. As to quaternary structure, homodimer. It depends on pyridoxal 5'-phosphate as a cofactor.

Its subcellular location is the cytoplasm. The enzyme catalyses (8S)-8-amino-7-oxononanoate + S-adenosyl-L-methionine = S-adenosyl-4-methylsulfanyl-2-oxobutanoate + (7R,8S)-7,8-diammoniononanoate. It functions in the pathway cofactor biosynthesis; biotin biosynthesis; 7,8-diaminononanoate from 8-amino-7-oxononanoate (SAM route): step 1/1. Its function is as follows. Catalyzes the transfer of the alpha-amino group from S-adenosyl-L-methionine (SAM) to 7-keto-8-aminopelargonic acid (KAPA) to form 7,8-diaminopelargonic acid (DAPA). It is the only aminotransferase known to utilize SAM as an amino donor. The protein is Adenosylmethionine-8-amino-7-oxononanoate aminotransferase of Buchnera aphidicola subsp. Schizaphis graminum (strain Sg).